Here is a 251-residue protein sequence, read N- to C-terminus: Glucosamine-6-phosphate deaminase (251 aa).

D67 (proton acceptor; for enolization step) is an active-site residue. N136 (for ring-opening step) is an active-site residue. The Proton acceptor; for ring-opening step role is filled by H138. The For ring-opening step role is filled by E143.

This sequence belongs to the glucosamine/galactosamine-6-phosphate isomerase family. NagB subfamily.

The enzyme catalyses alpha-D-glucosamine 6-phosphate + H2O = beta-D-fructose 6-phosphate + NH4(+). The protein operates within amino-sugar metabolism; N-acetylneuraminate degradation; D-fructose 6-phosphate from N-acetylneuraminate: step 5/5. Its function is as follows. Catalyzes the reversible isomerization-deamination of glucosamine 6-phosphate (GlcN6P) to form fructose 6-phosphate (Fru6P) and ammonium ion. The chain is Glucosamine-6-phosphate deaminase from Geobacillus sp. (strain WCH70).